The chain runs to 228 residues: Aquaporin Z (228 aa).

2 consecutive transmembrane segments (helical) span residues 1 to 21 (MLNK…GGCG) and 23 to 43 (AILA…ALAF). Residues 63–65 (NPA) carry the NPA 1 motif. 3 consecutive transmembrane segments (helical) span residues 82-102 (IPYW…LYVI), 129-149 (MMAG…IILG), and 154-174 (LAPA…IHLV). Positions 184 to 186 (NPA) match the NPA 2 motif. A helical membrane pass occupies residues 205–225 (LFWVAPLVGAVIGAIIWKGLL).

The protein belongs to the MIP/aquaporin (TC 1.A.8) family. Homotetramer.

The protein resides in the cell inner membrane. It carries out the reaction H2O(in) = H2O(out). In terms of biological role, channel that permits osmotically driven movement of water in both directions. It is involved in the osmoregulation and in the maintenance of cell turgor during volume expansion in rapidly growing cells. It mediates rapid entry or exit of water in response to abrupt changes in osmolarity. In Brucella abortus biovar 1 (strain 9-941), this protein is Aquaporin Z.